Consider the following 485-residue polypeptide: N-succinylglutamate 5-semialdehyde dehydrogenase (485 aa).

Position 220-225 (220-225 (GSANTG)) interacts with NAD(+). Active-site residues include Glu243 and Cys278.

This sequence belongs to the aldehyde dehydrogenase family. AstD subfamily.

It catalyses the reaction N-succinyl-L-glutamate 5-semialdehyde + NAD(+) + H2O = N-succinyl-L-glutamate + NADH + 2 H(+). It functions in the pathway amino-acid degradation; L-arginine degradation via AST pathway; L-glutamate and succinate from L-arginine: step 4/5. In terms of biological role, catalyzes the NAD-dependent reduction of succinylglutamate semialdehyde into succinylglutamate. In Vibrio cholerae serotype O1 (strain ATCC 39541 / Classical Ogawa 395 / O395), this protein is N-succinylglutamate 5-semialdehyde dehydrogenase.